Reading from the N-terminus, the 260-residue chain is Salicylic acid-binding protein 2 (260 aa).

Residues alanine 13, serine 81, and lysine 159 each contribute to the salicylate site. The active-site Acyl-ester intermediate is serine 81. Residues aspartate 210 and histidine 238 each act as charge relay system in the active site. Positions 238, 253, and 257 each coordinate salicylate.

The protein belongs to the AB hydrolase superfamily. Methylesterase family.

It carries out the reaction methyl salicylate + H2O = salicylate + methanol + H(+). The protein operates within plant hormone biosynthesis. Its activity is regulated as follows. Esterase activity is down-regulated by salicylic acid (SA) or by tetraFA, a synthetic SA analog. Required to convert methyl salicylate (MeSA) to salicylic acid (SA) as part of the signal transduction pathways that activate systemic acquired resistance in systemic tissue. MeSA is believed to be an inactive form that needs to be demethylated to exert a biological effect. Also able to catalyze the conversion of acibenzolar-S-methyl into acibenzolar to induce systemic acquired resistance. This Nicotiana tabacum (Common tobacco) protein is Salicylic acid-binding protein 2.